The following is a 368-amino-acid chain: MAAVITWALALLAVFASTQARKSLWDYFSQNSWSKGVMGQPQKLAQENLKGSFEQDLYNMNNYLEKLGPLRGPGKEPPLLAQDPEGIRKQLQQELGEVSSRLEPYMAAKHQQVGWNLEGLRQQLKPYTAELMEQVGLSVQELQEQLRVVGEDTKAQLLGGVDEALNLLQDMQSRVLHHTDRVKELFHPYAERLVTGIGHHVQELHRSVAPHAAASPARLSRCVQTLSHKLTRKAKDLHTSIQRNLDQLRDELSAFIRVSTDGAEDGDSLDPQALSEEVRQRLQAFRHDTYLQIAAFTQAIDQETEEIQHQLAPPPPSHSAFAPELGHSDSNKALSRLQSRLDDLWEDIAYGLQDQGHSHLSDPEGHSG.

An N-terminal signal peptide occupies residues methionine 1–alanine 20. Phosphoserine is present on serine 52. Residues threonine 231 to phenylalanine 255 are a coiled coil. The tract at residues glutamate 305 to alanine 333 is disordered.

The protein belongs to the apolipoprotein A1/A4/E family. In terms of assembly, interacts with GPIHBP1. Interacts with SORL1; this interaction leads to APOA5 internalization and sorting either to lysosomes and degradation, or to the trans-Golgi network. In terms of processing, phosphorylated by FAM20C in the extracellular medium. In terms of tissue distribution, liver.

The protein resides in the secreted. It is found in the early endosome. Its subcellular location is the late endosome. The protein localises to the golgi apparatus. It localises to the trans-Golgi network. Minor apolipoprotein mainly associated with HDL and to a lesser extent with VLDL. May also be associated with chylomicrons. Important determinant of plasma triglyceride (TG) levels by both being a potent stimulator of apo-CII lipoprotein lipase (LPL) TG hydrolysis and an inhibitor of the hepatic VLDL-TG production rate (without affecting the VLDL-apoB production rate). Activates poorly lecithin:cholesterol acyltransferase (LCAT) and does not enhance efflux of cholesterol from macrophages. Binds heparin. The sequence is that of Apolipoprotein A-V (Apoa5) from Mus musculus (Mouse).